The chain runs to 20 residues: Brevinin-1DYc (20 aa).

A disulfide bond links Cys14 and Cys20.

In terms of tissue distribution, expressed by the skin glands.

The protein resides in the secreted. Functionally, antimicrobial peptide. Has low activity against the Gram-positive bacterium S.aureus and the Gram-negative bacterium E.coli (MIC&lt;15 uM). Has a strong hemolytic activity. The sequence is that of Brevinin-1DYc from Rana dybowskii (Dybovsky's frog).